Consider the following 344-residue polypeptide: MAQLIFDEEKVTSVIDRIVKRTFQMDFAWDWPGGVAFYGVAEAYEATENEEYINLLKTWVDEQLEDGLPPLSINGVSIGHTLLFLHKVTGDDVYLETAAEMAEYVLHKAPRFGEGILQHTVNAAEYVFPEQAWADTLMMAGLFMLRIGRVMEREDYFEDGLRQFHGHEDVLQDPVTNLYYHAWDNKAQNHLSGIYWGRANGWAALTMAKALPLIEVTHPSFMIIDGSLRDQLSALVRLQDESGLWHTILDDPDSYLEVSASAGIASALMSSGKLYTKYVQKSLAAILDAVEEDGRVSRVSAGTAVMKNAEGYKQVPYKRIQGWGQGLALTFLADVLKTKKRLYQ.

Residues 30–31 (DW), Asn-74, and 118–128 (QHTVNAAEYVF) contribute to the substrate site. Asp-135 (proton donor) is an active-site residue. Substrate contacts are provided by residues 198–202 (RANGW) and 308–309 (NA).

Belongs to the glycosyl hydrolase 105 family. As to quaternary structure, monomer.

It localises to the cytoplasm. It catalyses the reaction 2-O-(4-deoxy-beta-L-threo-hex-4-enopyranuronosyl)-alpha-L-rhamnose + H2O = 5-dehydro-4-deoxy-D-glucuronate + L-rhamnopyranose. In terms of biological role, catalyzes the hydrolysis of unsaturated rhamnogalacturonan disaccharide to yield unsaturated D-galacturonic acid and L-rhamnose. It cannot act on unsaturated glucuronyl hydrolase (UGL) substrates containing unsaturated D-glucuronic acid at the non-reducing terminus, although the active pockets of YesR and UGL are very similar. This is Unsaturated rhamnogalacturonyl hydrolase YesR (yesR) from Bacillus subtilis (strain 168).